Here is a 72-residue protein sequence, read N- to C-terminus: Cold shock-like protein CspD (72 aa).

The CSD domain occupies 4–64 (GIVKWFNNAK…SDKGSHATKI (61 aa)).

Its subcellular location is the cytoplasm. The protein is Cold shock-like protein CspD (cspD) of Haemophilus influenzae (strain ATCC 51907 / DSM 11121 / KW20 / Rd).